A 210-amino-acid chain; its full sequence is Somatotropin (210 aa).

Residues 1-22 (MGQVFLLMPVLLVSCFLSQGAA) form the signal peptide. Position 38 (His38) interacts with Zn(2+). A disulfide bridge links Cys71 with Cys183. Glu192 is a binding site for Zn(2+). A disulfide bridge links Cys200 with Cys208.

It belongs to the somatotropin/prolactin family.

It is found in the secreted. In terms of biological role, growth hormone plays an important role in growth control and is involved in the regulation of several anabolic processes. Implicated as an osmoregulatory substance important for seawater adaptation. In Oncorhynchus keta (Chum salmon), this protein is Somatotropin (gh).